The following is a 424-amino-acid chain: Glutamate-1-semialdehyde 2,1-aminomutase (424 aa).

The residue at position 258 (lysine 258) is an N6-(pyridoxal phosphate)lysine.

The protein belongs to the class-III pyridoxal-phosphate-dependent aminotransferase family. HemL subfamily. The cofactor is pyridoxal 5'-phosphate.

It is found in the cytoplasm. It carries out the reaction (S)-4-amino-5-oxopentanoate = 5-aminolevulinate. The protein operates within porphyrin-containing compound metabolism; protoporphyrin-IX biosynthesis; 5-aminolevulinate from L-glutamyl-tRNA(Glu): step 2/2. The sequence is that of Glutamate-1-semialdehyde 2,1-aminomutase from Pyrobaculum neutrophilum (strain DSM 2338 / JCM 9278 / NBRC 100436 / V24Sta) (Thermoproteus neutrophilus).